Consider the following 326-residue polypeptide: tRNA-modifying protein YgfZ (326 aa).

The folate site is built by W27 and W189.

The protein belongs to the tRNA-modifying YgfZ family.

Its subcellular location is the cytoplasm. Folate-binding protein involved in regulating the level of ATP-DnaA and in the modification of some tRNAs. It is probably a key factor in regulatory networks that act via tRNA modification, such as initiation of chromosomal replication. In Escherichia coli O45:K1 (strain S88 / ExPEC), this protein is tRNA-modifying protein YgfZ.